The chain runs to 554 residues: Glucose-6-phosphate isomerase (554 aa).

The Proton donor role is filled by E359. Catalysis depends on residues H390 and K518.

This sequence belongs to the GPI family.

The protein localises to the cytoplasm. It catalyses the reaction alpha-D-glucose 6-phosphate = beta-D-fructose 6-phosphate. It functions in the pathway carbohydrate biosynthesis; gluconeogenesis. The protein operates within carbohydrate degradation; glycolysis; D-glyceraldehyde 3-phosphate and glycerone phosphate from D-glucose: step 2/4. Its function is as follows. Catalyzes the reversible isomerization of glucose-6-phosphate to fructose-6-phosphate. The sequence is that of Glucose-6-phosphate isomerase from Pseudomonas putida (strain GB-1).